The sequence spans 218 residues: Elongation factor Ts (218 aa).

The segment at threonine 82–valine 85 is involved in Mg(2+) ion dislocation from EF-Tu.

This sequence belongs to the EF-Ts family.

The protein localises to the cytoplasm. In terms of biological role, associates with the EF-Tu.GDP complex and induces the exchange of GDP to GTP. It remains bound to the aminoacyl-tRNA.EF-Tu.GTP complex up to the GTP hydrolysis stage on the ribosome. This is Elongation factor Ts from Prochlorococcus marinus (strain MIT 9303).